The chain runs to 248 residues: Trypsin I-P38 (248 aa).

The signal sequence occupies residues 1–15 (MKFLVLVAFLGVAVA). Positions 16-25 (FPISDEDDDK) are cleaved as a propeptide — activation peptide. One can recognise a Peptidase S1 domain in the interval 26–246 (IVGGYSCARS…YVSWIKTTMS (221 aa)). Disulfide bonds link cysteine 32-cysteine 162, cysteine 50-cysteine 66, cysteine 134-cysteine 235, cysteine 141-cysteine 208, cysteine 173-cysteine 187, and cysteine 198-cysteine 222. Residue histidine 65 is the Charge relay system of the active site. Glutamate 77, asparagine 79, and glutamate 87 together coordinate Ca(2+). Aspartate 109 functions as the Charge relay system in the catalytic mechanism. Catalysis depends on serine 202, which acts as the Charge relay system.

It belongs to the peptidase S1 family. It depends on Ca(2+) as a cofactor. In terms of tissue distribution, high levels are seen in the pancreas while lower levels are found in the liver, spleen and thymus.

It is found in the secreted. It localises to the extracellular space. It carries out the reaction Preferential cleavage: Arg-|-Xaa, Lys-|-Xaa.. The chain is Trypsin I-P38 from Gallus gallus (Chicken).